Consider the following 466-residue polypeptide: 3-isopropylmalate dehydratase large subunit (466 aa).

[4Fe-4S] cluster is bound by residues cysteine 347, cysteine 407, and cysteine 410.

It belongs to the aconitase/IPM isomerase family. LeuC type 1 subfamily. As to quaternary structure, heterodimer of LeuC and LeuD. [4Fe-4S] cluster serves as cofactor.

It carries out the reaction (2R,3S)-3-isopropylmalate = (2S)-2-isopropylmalate. The protein operates within amino-acid biosynthesis; L-leucine biosynthesis; L-leucine from 3-methyl-2-oxobutanoate: step 2/4. Catalyzes the isomerization between 2-isopropylmalate and 3-isopropylmalate, via the formation of 2-isopropylmaleate. In Escherichia coli O17:K52:H18 (strain UMN026 / ExPEC), this protein is 3-isopropylmalate dehydratase large subunit.